We begin with the raw amino-acid sequence, 103 residues long: Large ribosomal subunit protein uL24 (103 aa).

It belongs to the universal ribosomal protein uL24 family. Part of the 50S ribosomal subunit.

Its function is as follows. One of two assembly initiator proteins, it binds directly to the 5'-end of the 23S rRNA, where it nucleates assembly of the 50S subunit. In terms of biological role, one of the proteins that surrounds the polypeptide exit tunnel on the outside of the subunit. This chain is Large ribosomal subunit protein uL24, found in Haemophilus influenzae (strain 86-028NP).